The primary structure comprises 123 residues: U9-barytoxin-Tl1a (123 aa).

An N-terminal signal peptide occupies residues 1–18 (MNTMITFLVLFVLTAANG). Residues 19-77 (APEANERKIPEAIHNEDQSLAEMAEELMFFLQQTEFEAPLLQEEEEAEXAEXRNSRERR) constitute a propeptide that is removed on maturation. Cystine bridges form between C78–C93, C85–C98, and C92–C112.

It belongs to the neurotoxin 14 (magi-1) family. 05 (ICK-7) subfamily. ICK-7 sub-subfamily. As to expression, expressed by the venom gland.

The protein localises to the secreted. Functionally, ion channel inhibitor. This chain is U9-barytoxin-Tl1a, found in Trittame loki (Brush-footed trapdoor spider).